A 108-amino-acid polypeptide reads, in one-letter code: MSEAKDNGSRDEVLVPHKNCRKNTTVPGKKGEEKSLAPVFAEKLISPSRRGAKLKDRESHQENEDRNSELDQDEEDKESFCRGFPMSGCELETSCCVCHSTALGERFC.

Composition is skewed to basic and acidic residues over residues 1–15 (MSEAKDNGSRDEVLV) and 53–69 (KLKDRESHQENEDRNSE). The disordered stretch occupies residues 1 to 77 (MSEAKDNGSR…SELDQDEEDK (77 aa)).

This is an uncharacterized protein from Homo sapiens (Human).